The primary structure comprises 317 residues: Melanocyte-stimulating hormone receptor (317 aa).

At M1–E37 the chain is on the extracellular side. N-linked (GlcNAc...) asparagine glycosylation occurs at N29. Residues V38–I63 traverse the membrane as a helical segment. Residues A64–P72 lie on the Cytoplasmic side of the membrane. Residues M73 to L93 traverse the membrane as a helical segment. The Extracellular portion of the chain corresponds to E94–N118. A helical transmembrane segment spans residues V119–V140. The Cytoplasmic portion of the chain corresponds to D141–R163. A helical membrane pass occupies residues V164–C183. At D184–S191 the chain is on the extracellular side. The chain crosses the membrane as a helical span at residues L192–L211. Over A212–A240 the chain is Cytoplasmic. A helical membrane pass occupies residues A241–L266. The Extracellular portion of the chain corresponds to C267 to N279. A helical transmembrane segment spans residues F280–F300. The Cytoplasmic segment spans residues R301–W317. The S-palmitoyl cysteine moiety is linked to residue C315.

The protein belongs to the G-protein coupled receptor 1 family. As to quaternary structure, interacts with MGRN1, but does not undergo MGRN1-mediated ubiquitination; this interaction competes with GNAS-binding and thus inhibits agonist-induced cAMP production. Interacts with OPN3; the interaction results in a decrease in MC1R-mediated cAMP signaling and ultimately a decrease in melanin production in melanocytes.

The protein localises to the cell membrane. In terms of biological role, receptor for MSH (alpha, beta and gamma) and ACTH. The activity of this receptor is mediated by G proteins which activate adenylate cyclase. Mediates melanogenesis, the production of eumelanin (black/brown) and phaeomelanin (red/yellow), via regulation of cAMP signaling in melanocytes. The sequence is that of Melanocyte-stimulating hormone receptor (MC1R) from Trachypithecus auratus (Javan langur).